A 91-amino-acid chain; its full sequence is Long neurotoxin OH-37 (91 aa).

Positions 1 to 21 (MKTLLLTLVVMTIVCLDLGYS) are cleaved as a signal peptide. Disulfide bonds link cysteine 24–cysteine 41, cysteine 34–cysteine 62, cysteine 47–cysteine 51, cysteine 66–cysteine 77, and cysteine 78–cysteine 83.

Belongs to the three-finger toxin family. Long-chain subfamily. Type II alpha-neurotoxin sub-subfamily. As to expression, expressed by the venom gland.

Its subcellular location is the secreted. Functionally, binds with high affinity to muscular (alpha-1/CHRNA1) and neuronal (alpha-7/CHRNA7) nicotinic acetylcholine receptor (nAChR) and inhibits acetylcholine from binding to the receptor, thereby impairing neuromuscular and neuronal transmission. This is Long neurotoxin OH-37 from Ophiophagus hannah (King cobra).